Here is a 132-residue protein sequence, read N- to C-terminus: Small ribosomal subunit protein uS19 (132 aa).

The protein belongs to the universal ribosomal protein uS19 family.

Functionally, protein S19 forms a complex with S13 that binds strongly to the 16S ribosomal RNA. The sequence is that of Small ribosomal subunit protein uS19 from Korarchaeum cryptofilum (strain OPF8).